A 143-amino-acid chain; its full sequence is Transcriptional regulator MraZ (143 aa).

2 SpoVT-AbrB domains span residues 5-47 (EYKH…SLKE) and 76-119 (ACEC…SENN).

This sequence belongs to the MraZ family. In terms of assembly, forms oligomers.

It localises to the cytoplasm. The protein resides in the nucleoid. This is Transcriptional regulator MraZ from Caldicellulosiruptor bescii (strain ATCC BAA-1888 / DSM 6725 / KCTC 15123 / Z-1320) (Anaerocellum thermophilum).